Reading from the N-terminus, the 448-residue chain is Tubulin beta chain (448 aa).

GTP contacts are provided by Q11, E69, S138, G142, T143, G144, N204, and N226. E69 contributes to the Mg(2+) binding site. A disordered region spans residues 425 to 448 (YQDASISEGEEEYLEEEEPLEHEE). Acidic residues predominate over residues 432–448 (EGEEEYLEEEEPLEHEE).

Belongs to the tubulin family. In terms of assembly, dimer of alpha and beta chains. A typical microtubule is a hollow water-filled tube with an outer diameter of 25 nm and an inner diameter of 15 nM. Alpha-beta heterodimers associate head-to-tail to form protofilaments running lengthwise along the microtubule wall with the beta-tubulin subunit facing the microtubule plus end conferring a structural polarity. Microtubules usually have 13 protofilaments but different protofilament numbers can be found in some organisms and specialized cells. The cofactor is Mg(2+).

Its subcellular location is the cytoplasm. The protein resides in the cytoskeleton. In terms of biological role, tubulin is the major constituent of microtubules, a cylinder consisting of laterally associated linear protofilaments composed of alpha- and beta-tubulin heterodimers. Microtubules grow by the addition of GTP-tubulin dimers to the microtubule end, where a stabilizing cap forms. Below the cap, tubulin dimers are in GDP-bound state, owing to GTPase activity of alpha-tubulin. The sequence is that of Tubulin beta chain from Aspergillus flavus.